The chain runs to 423 residues: uncharacterized protein (423 aa).

The interval 383–423 (ARGTTGGGGTRSGTSTDGQEDGRKPPVVVIREQPPPGNPPR) is disordered.

This sequence belongs to the mycobacterial PPE family.

This is an uncharacterized protein from Mycobacterium tuberculosis (strain CDC 1551 / Oshkosh).